Consider the following 463-residue polypeptide: Lysosomal proton-coupled steroid conjugate and bile acid symporter SLC46A3 (463 aa).

The N-terminal stretch at Met1–Thr20 is a signal peptide. At Ser21–Asn73 the chain is on the extracellular side. N-linked (GlcNAc...) asparagine glycans are attached at residues Asn38, Asn46, and Asn53. Residues Leu74–Ile94 traverse the membrane as a helical segment. Residues Ser95–Lys101 lie on the Cytoplasmic side of the membrane. The chain crosses the membrane as a helical span at residues Phe102 to Phe124. The Extracellular segment spans residues Ala125 to Ala133. Residues Ser134–Val156 traverse the membrane as a helical segment. At Asp157–Ala170 the chain is on the cytoplasmic side. Residues Val171–Ile191 traverse the membrane as a helical segment. Topologically, residues Arg192–Gly197 are extracellular. The helical transmembrane segment at Trp198–Leu218 threads the bilayer. The Cytoplasmic segment spans residues Gly219–Cys261. Residues Leu262 to Ile282 form a helical membrane-spanning segment. The Extracellular segment spans residues Leu283–Glu294. A helical membrane pass occupies residues Val295–Ile315. Residues Trp316–Asp324 lie on the Cytoplasmic side of the membrane. The helical transmembrane segment at Ile325–Ala345 threads the bilayer. Topologically, residues Ser346 to Thr347 are extracellular. A helical membrane pass occupies residues Thr348–Leu368. Residues Arg369 to Gly382 lie on the Cytoplasmic side of the membrane. The chain crosses the membrane as a helical span at residues Ile383–Phe403. The Extracellular portion of the chain corresponds to Asn404 to Pro415. The helical transmembrane segment at Gly416–Val436 threads the bilayer. The Cytoplasmic segment spans residues Lys437 to Cys463. The Tyrosine-based lysosomal-sorting motif signature appears at Tyr446–Leu449.

Belongs to the major facilitator superfamily. SLC46A family.

It is found in the lysosome membrane. It carries out the reaction estrone 3-sulfate(out) + n H(+)(out) = estrone 3-sulfate(in) + n H(+)(in). The catalysed reaction is 25-hydroxyvitamin D3 sulfate(out) + n H(+)(out) = 25-hydroxyvitamin D3 sulfate(in) + n H(+)(in). It catalyses the reaction cholate(out) + n H(+)(out) = cholate(in) + n H(+)(in). The enzyme catalyses glycocholate(out) + n H(+)(out) = glycocholate(in) + n H(+)(in). It carries out the reaction taurocholate(out) + n H(+)(out) = taurocholate(in) + n H(+)(in). The catalysed reaction is dehydroepiandrosterone 3-sulfate(out) + n H(+)(out) = dehydroepiandrosterone 3-sulfate(in) + n H(+)(in). It catalyses the reaction N-acetyl-D-muramoyl-L-alanyl-D-isoglutamine(out) + n H(+)(out) = N-acetyl-D-muramoyl-L-alanyl-D-isoglutamine(in) + n H(+)(in). The enzyme catalyses 2',3'-cGAMP(out) + n H(+)(out) = 2',3'-cGAMP(in) + n H(+)(in). In terms of biological role, lysosomal proton-coupled steroid conjugate and bile acid transporter. Preferentially recognizes lipophilic steroid conjugates or bile acis as endogenous substrates and seems to mediate escape from lysosomes to the cytoplasm. Modulates hepatic cytosolic copper homeostasis, maybe acting as a lysosomal copper transporter and sequestering copper ions in the lysosome. Delivers pathogen-associated molecular patterns to cytosolic pattern recognition receptors as part of the innate immune response to microbes. Selectively transports bacterial muramyl dipeptide (MDP) into the cytosol for recognition by NOD2, triggering inflammatory responses. Likely acts as a redundant importer of cyclic GMP-AMP dinucleotides (cGAMPs) in monocyte and macrophage cell lineages. The transport mechanism, its electrogenicity and stoichiometry remain to be elucidated. This chain is Lysosomal proton-coupled steroid conjugate and bile acid symporter SLC46A3 (SLC46A3), found in Pongo abelii (Sumatran orangutan).